A 399-amino-acid polypeptide reads, in one-letter code: Putative 3'-5' exonuclease R431 (399 aa).

The region spanning 118 to 297 (FQIVDNWIEN…IYNELQLMTN (180 aa)) is the 3'-5' exonuclease domain. The R3H domain maps to 335–399 (ERRLKSIESK…NKYVIITRHC (65 aa)).

This Acanthamoeba polyphaga (Amoeba) protein is Putative 3'-5' exonuclease R431.